A 461-amino-acid chain; its full sequence is Glycine--tRNA ligase (461 aa).

The substrate site is built by Arg-100 and Glu-163. Residues 195–197 (RNE), 205–210 (FRTREF), 282–283 (EL), and 326–329 (GLGR) each bind ATP. 210–214 (FEQME) is a binding site for substrate. 322–326 (EPAAG) contributes to the substrate binding site.

It belongs to the class-II aminoacyl-tRNA synthetase family. Homodimer.

It localises to the cytoplasm. The catalysed reaction is tRNA(Gly) + glycine + ATP = glycyl-tRNA(Gly) + AMP + diphosphate. Catalyzes the attachment of glycine to tRNA(Gly). In Corynebacterium efficiens (strain DSM 44549 / YS-314 / AJ 12310 / JCM 11189 / NBRC 100395), this protein is Glycine--tRNA ligase.